Here is a 968-residue protein sequence, read N- to C-terminus: RNA polymerase-associated protein RapA (968 aa).

In terms of domain architecture, Helicase ATP-binding spans 164–334 (DVGRRHAPRV…FARLRLLDPN (171 aa)). 177–184 (DEVGLGKT) provides a ligand contact to ATP. Residues 280–283 (DEAH) carry the DEAH box motif. Residues 490–662 (RVEWLMGYLT…YLASPDQTEG (173 aa)) form the Helicase C-terminal domain.

Belongs to the SNF2/RAD54 helicase family. RapA subfamily. Interacts with the RNAP. Has a higher affinity for the core RNAP than for the holoenzyme. Its ATPase activity is stimulated by binding to RNAP.

Its function is as follows. Transcription regulator that activates transcription by stimulating RNA polymerase (RNAP) recycling in case of stress conditions such as supercoiled DNA or high salt concentrations. Probably acts by releasing the RNAP, when it is trapped or immobilized on tightly supercoiled DNA. Does not activate transcription on linear DNA. Probably not involved in DNA repair. This Escherichia coli O139:H28 (strain E24377A / ETEC) protein is RNA polymerase-associated protein RapA.